The chain runs to 1684 residues: GRIP and coiled-coil domain-containing protein 2 (1684 aa).

Methionine 1 is subject to N-acetylmethionine. Positions 1–22 (MEDLVQDGVASPATPGTGKSKL) are disordered. Serine 11 carries the post-translational modification Phosphoserine. A Phosphothreonine modification is found at threonine 14. Positions 110-1618 (VTKMGDAHKE…REKSAANLEY (1509 aa)) form a coiled coil. Residues serine 236, serine 1483, and serine 1487 each carry the phosphoserine modification. Positions 1475-1502 (LKNEPTTRSPVSSQQSLKNLRERRNTDL) are disordered. Residues 1477–1492 (NEPTTRSPVSSQQSLK) show a composition bias toward polar residues. A mediates interaction with RAB6A region spans residues 1574 to 1613 (HLNGLLRETEATNAILMEQIKLLKSEIRRLERNQEREKSA). The interval 1574 to 1684 (HLNGLLRETE…SYLHSWSGLR (111 aa)) is mediates interaction with RAB9A. Positions 1609-1659 (REKSAANLEYLKNVLLQFIFLKPGSERERLLPVINTMLQLSPEEKGKLAAV) constitute a GRIP domain.

As to quaternary structure, homodimer. Interacts (via GRIP domain) with RAB6A (preferentially in its GTP-bound form). May interact (RAB6A-dependent) with ARL1; according to PubMed:19703403, RAB6A and ARL1 are not involved in GCC2 Golgi localization as proposed by PubMed:18243103. Interacts (probably via GRIP domain) with RAB9A (preferentially in its GTP-bound form). Interacts with CLASP1 and CLASP2; recruits both proteins to membranes of the TGN. Interacts with STX16. Ubiquitous.

The protein resides in the cytoplasm. It is found in the golgi apparatus. The protein localises to the trans-Golgi network membrane. Functionally, golgin which probably tethers transport vesicles to the trans-Golgi network (TGN) and regulates vesicular transport between the endosomes and the Golgi. As a RAB9A effector it is involved in recycling of the mannose 6-phosphate receptor from the late endosomes to the TGN. May also play a role in transport between the recycling endosomes and the Golgi. Required for maintenance of the Golgi structure, it is involved in the biogenesis of noncentrosomal, Golgi-associated microtubules through recruitment of CLASP1 and CLASP2. In Homo sapiens (Human), this protein is GRIP and coiled-coil domain-containing protein 2 (GCC2).